Consider the following 200-residue polypeptide: Glycerol-3-phosphate acyltransferase (200 aa).

5 helical membrane-spanning segments follow: residues 2–22, 51–71, 84–104, 113–133, and 143–163; these read IHLL…AVIV, TAAI…VVAA, IVLL…FFGF, ALGI…ATWV, and SLSA…LLGW.

Belongs to the PlsY family. In terms of assembly, probably interacts with PlsX.

It is found in the cell inner membrane. The enzyme catalyses an acyl phosphate + sn-glycerol 3-phosphate = a 1-acyl-sn-glycero-3-phosphate + phosphate. It participates in lipid metabolism; phospholipid metabolism. Functionally, catalyzes the transfer of an acyl group from acyl-phosphate (acyl-PO(4)) to glycerol-3-phosphate (G3P) to form lysophosphatidic acid (LPA). This enzyme utilizes acyl-phosphate as fatty acyl donor, but not acyl-CoA or acyl-ACP. In Thiobacillus denitrificans (strain ATCC 25259 / T1), this protein is Glycerol-3-phosphate acyltransferase.